Consider the following 390-residue polypeptide: Protein AC109 (390 aa).

The protein resides in the host cytoplasm. It localises to the host nucleus. In terms of biological role, plays a role in the transport of the budded virion (BV) to the host nucleus and for occlusion of viral progeny. The polypeptide is Protein AC109 (ORF109) (Lepidoptera (butterflies and moths)).